Reading from the N-terminus, the 598-residue chain is Nuclear receptor subfamily 4 group A member 2 (598 aa).

The segment at 1 to 22 is disordered; that stretch reads MPCVQAQYGSSPQGASPASQGY. Over residues 7-18 the composition is skewed to polar residues; the sequence is QYGSSPQGASPA. The nuclear receptor DNA-binding region spans 260–335; sequence EGLCAVCGDN…VGMVKEVVRT (76 aa). 2 NR C4-type zinc fingers span residues 263–283 and 299–318; these read CAVC…CEGC and CLAN…CQYC. The Bipartite nuclear localization signal (NLS1) motif lies at 287-314; that stretch reads FKRTVQKNAKYVCLANKNCPVDKRRRNR. A disordered region spans residues 337-361; sequence SLKGRRGRLPSKPKSPQEPSPPSPP. The Nuclear localization signal (NLS1) signature appears at 338–350; sequence LKGRRGRLPSKPK. Residues 352-361 are compositionally biased toward pro residues; the sequence is PQEPSPPSPP. Residues 360-595 enclose the NR LBD domain; it reads PPVSLISALV…AIIDKLFLDT (236 aa). The nuclear export sequence (NES1) motif lies at 443–452; sequence FLELFVLRLA. Positions 568 to 577 match the nuclear export sequence (NES2) motif; sequence QGLQRIFYLK.

It belongs to the nuclear hormone receptor family. Interacts with SFPQ, NCOR2, SIN3A and HADC1. The interaction with NCOR2 increases in the absence of PITX3. Interacts with PER2.

The protein resides in the cytoplasm. Its subcellular location is the nucleus. Its function is as follows. Transcriptional regulator which is important for the differentiation and maintenance of meso-diencephalic dopaminergic (mdDA) neurons during development. It is crucial for expression of a set of genes such as SLC6A3, SLC18A2, TH and DRD2 which are essential for development of mdDA neurons. This Pongo abelii (Sumatran orangutan) protein is Nuclear receptor subfamily 4 group A member 2 (NR4A2).